The sequence spans 510 residues: GMP synthase [glutamine-hydrolyzing] (510 aa).

The region spanning 5–195 (LVLVVDFGGQ…LFNVCNLKGD (191 aa)) is the Glutamine amidotransferase type-1 domain. The active-site Nucleophile is Cys82. Active-site residues include His169 and Glu171. In terms of domain architecture, GMPS ATP-PPase spans 196-385 (WSMSSFAEQQ…LGIPHKLVWR (190 aa)). 223-229 (SGGVDSS) serves as a coordination point for ATP.

Homodimer.

The enzyme catalyses XMP + L-glutamine + ATP + H2O = GMP + L-glutamate + AMP + diphosphate + 2 H(+). It functions in the pathway purine metabolism; GMP biosynthesis; GMP from XMP (L-Gln route): step 1/1. Functionally, catalyzes the synthesis of GMP from XMP. In Clostridium botulinum (strain Loch Maree / Type A3), this protein is GMP synthase [glutamine-hydrolyzing].